The chain runs to 156 residues: Snaclec A15 (156 aa).

The N-terminal stretch at 1–23 (MGRFIFVRFGLLVVFLSLSGTGA) is a signal peptide. 3 cysteine pairs are disulfide-bonded: C27–C38, C55–C152, and C127–C144. Residues 34-153 (YDQHCYKAFD…CGDDYPFVCK (120 aa)) enclose the C-type lectin domain. N141 carries an N-linked (GlcNAc...) asparagine glycan.

It belongs to the snaclec family. In terms of assembly, heterodimer; disulfide-linked. Expressed by the venom gland.

It is found in the secreted. Interferes with one step of hemostasis (modulation of platelet aggregation, or coagulation cascade, for example). The protein is Snaclec A15 of Macrovipera lebetinus (Levantine viper).